Consider the following 152-residue polypeptide: Protein-export protein SecB (152 aa).

Belongs to the SecB family. As to quaternary structure, homotetramer, a dimer of dimers. One homotetramer interacts with 1 SecA dimer.

It is found in the cytoplasm. Functionally, one of the proteins required for the normal export of preproteins out of the cell cytoplasm. It is a molecular chaperone that binds to a subset of precursor proteins, maintaining them in a translocation-competent state. It also specifically binds to its receptor SecA. This Rickettsia peacockii (strain Rustic) protein is Protein-export protein SecB.